A 1578-amino-acid chain; its full sequence is Mediator of RNA polymerase II transcription subunit 14 (1578 aa).

The LXXLL motif 1 motif lies at 49 to 53; it reads LAELL. The interval 561–582 is disordered; the sequence is SQSVTAGGTSQSSAPSAATTES. A compositionally biased stretch (low complexity) spans 565–580; sequence TAGGTSQSSAPSAATT. Positions 739-743 match the LXXLL motif 2 motif; sequence LKRLL. 2 disordered regions span residues 1009–1173 and 1510–1578; these read RRRS…PDHK and APGG…GGPN. Positions 1084 to 1093 are enriched in polar residues; the sequence is SQSHPNFNMT. Composition is skewed to pro residues over residues 1095–1104 and 1157–1167; these read PPAPHMPHPS and PGMPRPSPRPG. Composition is skewed to gly residues over residues 1510–1521 and 1547–1578; these read APGGPGGPGPMG and MGGG…GGPN.

It belongs to the Mediator complex subunit 14 family. As to quaternary structure, component of the Mediator complex.

The protein localises to the nucleus. In terms of biological role, component of the Mediator complex, a coactivator involved in the regulated transcription of nearly all RNA polymerase II-dependent genes. Mediator functions as a bridge to convey information from gene-specific regulatory proteins to the basal RNA polymerase II transcription machinery. Mediator is recruited to promoters by direct interactions with regulatory proteins and serves as a scaffold for the assembly of a functional preinitiation complex with RNA polymerase II and the general transcription factors. The chain is Mediator of RNA polymerase II transcription subunit 14 (MED14) from Aedes aegypti (Yellowfever mosquito).